We begin with the raw amino-acid sequence, 333 residues long: MARHSFFCIDGHTCGNPVRLVAGGGPNLQGANMIEKRAHFLAEYDWIRTGLMFEPRGHDMMSGSILYPPTRPDCDVAILFIETSGCLPMCGHGTIGTVTMAIEHGLVTPKIPGVLMLDTPAGVVKAEYRQEGQYVEEVRITNVPAFLYARGLTAECPGLGEVMVDVAYGGNFYAIVEPQEHFRDMADFTAGELIGMSGALRKALNAKYEFVHPEKPEIRGLSHILWTGAPKHAEAHARNAVFYGDKAIDRSPCGTGTSARIAHWAANGKLKVGDDFVHESIIGSLFKGRVEATARVGNVDAIIPSIGGWARMTGYNTIFIDDRDPFAHGFVVV.

Catalysis depends on C90, which acts as the Proton acceptor. Residues 91–92 (GH), H223, and D249 each bind substrate. C253 (proton donor) is an active-site residue. Residue 254–255 (GT) participates in substrate binding.

The protein belongs to the proline racemase family.

The enzyme catalyses trans-4-hydroxy-L-proline = cis-4-hydroxy-D-proline. Functionally, catalyzes the epimerization of trans-4-hydroxy-L-proline (t4LHyp) to cis-4-hydroxy-D-proline (c4DHyp). May be involved in a degradation pathway of t4LHyp, which would allow S.novella to grow on t4LHyp as a sole carbon source. In Ancylobacter novellus (strain ATCC 8093 / DSM 506 / JCM 20403 / CCM 1077 / IAM 12100 / NBRC 12443 / NCIMB 10456) (Starkeya novella), this protein is 4-hydroxyproline 2-epimerase.